The sequence spans 210 residues: Calcium-activated potassium channel subunit beta-4 (210 aa).

Residues 1 to 19 are Cytoplasmic-facing; that stretch reads MAKLRVAYEYTEAEDKSIR. Residues 20 to 40 traverse the membrane as a helical segment; that stretch reads LGLFLIISGVVSLFIFGFCWL. The Extracellular segment spans residues 41 to 167; the sequence is SPALQDLQAT…DVLLHRTHDE (127 aa). Asn53 and Asn90 each carry an N-linked (GlcNAc...) asparagine glycan. A helical transmembrane segment spans residues 168–188; it reads IVLLHCFLWPLVTFVVGVLIV. The Cytoplasmic portion of the chain corresponds to 189-210; it reads VLTICAKSLAVKAEAMKKRKFS.

It belongs to the KCNMB (TC 8.A.14.1) family. KCNMB4 subfamily. As to quaternary structure, interacts with KCNMA1 tetramer. There are probably 4 molecules of KCMNB4 per KCNMA1 tetramer. Interacts with FMR1 (via N-terminus). Post-translationally, phosphorylated. Phosphorylation modulates its effect on KCNMA1 activation kinetics. N-glycosylated. A highly glycosylated form is promoted by KCNMA1. Glycosylation, which is not required for the interaction with KCNMA1 and subcellular location, increases protection against charybdotoxin. In terms of tissue distribution, predominantly expressed in brain. In brain, it is expressed in the cerebellum, cerebral cortex, medulla, spinal cord, occipital pole, frontal lobe, temporal lobe, putamen, amygdala, caudate nucleus, corpus callosum, hippocampus, substantia nigra and thalamus. Weakly or not expressed in other tissues.

Its subcellular location is the membrane. Its function is as follows. Regulatory subunit of the calcium activated potassium KCNMA1 (maxiK) channel. Modulates the calcium sensitivity and gating kinetics of KCNMA1, thereby contributing to KCNMA1 channel diversity. Decreases the gating kinetics and calcium sensitivity of the KCNMA1 channel, but with fast deactivation kinetics. May decrease KCNMA1 channel openings at low calcium concentrations but increases channel openings at high calcium concentrations. Makes KCNMA1 channel resistant to 100 nM charybdotoxin (CTX) toxin concentrations. The sequence is that of Calcium-activated potassium channel subunit beta-4 (KCNMB4) from Homo sapiens (Human).